The chain runs to 300 residues: Haloalkane dehalogenase (300 aa).

An AB hydrolase-1 domain is found at 32–155 (AIVFQHGNPT…PAVRGVFQGF (124 aa)). Residue Asp-109 is the Nucleophile of the active site. Glu-133 serves as the catalytic Proton donor. The active-site Proton acceptor is the His-273.

Belongs to the haloalkane dehalogenase family. Type 2 subfamily. As to quaternary structure, monomer.

It catalyses the reaction 1-haloalkane + H2O = a halide anion + a primary alcohol + H(+). Functionally, catalyzes hydrolytic cleavage of carbon-halogen bonds in halogenated aliphatic compounds, leading to the formation of the corresponding primary alcohols, halide ions and protons. The polypeptide is Haloalkane dehalogenase (Mycobacterium bovis (strain ATCC BAA-935 / AF2122/97)).